The chain runs to 141 residues: MAKKVEKLVKLQIPAGKATPAPPVGPALGQAGINIMGFTKEFNARTADQAGMIIPVVISVYEDKSFDFITKTPPAAVLLKKAAGVEKGSGTPNKTKVATVTRAQVQEIAETKMPDLNAANIEAAMRMIEGTARSMGFTVTD.

Belongs to the universal ribosomal protein uL11 family. Part of the ribosomal stalk of the 50S ribosomal subunit. Interacts with L10 and the large rRNA to form the base of the stalk. L10 forms an elongated spine to which L12 dimers bind in a sequential fashion forming a multimeric L10(L12)X complex. One or more lysine residues are methylated.

Forms part of the ribosomal stalk which helps the ribosome interact with GTP-bound translation factors. The sequence is that of Large ribosomal subunit protein uL11 from Streptococcus equi subsp. equi (strain 4047).